The chain runs to 236 residues: Phosphoribosylaminoimidazole-succinocarboxamide synthase (236 aa).

The protein belongs to the SAICAR synthetase family.

The catalysed reaction is 5-amino-1-(5-phospho-D-ribosyl)imidazole-4-carboxylate + L-aspartate + ATP = (2S)-2-[5-amino-1-(5-phospho-beta-D-ribosyl)imidazole-4-carboxamido]succinate + ADP + phosphate + 2 H(+). Its pathway is purine metabolism; IMP biosynthesis via de novo pathway; 5-amino-1-(5-phospho-D-ribosyl)imidazole-4-carboxamide from 5-amino-1-(5-phospho-D-ribosyl)imidazole-4-carboxylate: step 1/2. The chain is Phosphoribosylaminoimidazole-succinocarboxamide synthase from Pseudomonas syringae pv. tomato (strain ATCC BAA-871 / DC3000).